The primary structure comprises 507 residues: UDP-glycosyltransferase 73D1 (507 aa).

UDP-alpha-D-glucose is bound by residues Ser298, 359 to 361 (SPQ), 376 to 384 (HCGWNSTIE), and 398 to 401 (FAEQ).

Belongs to the UDP-glycosyltransferase family.

The chain is UDP-glycosyltransferase 73D1 (UGT73D1) from Arabidopsis thaliana (Mouse-ear cress).